The following is a 64-amino-acid chain: Small ribosomal subunit protein eS17 (64 aa).

This sequence belongs to the eukaryotic ribosomal protein eS17 family.

The protein is Small ribosomal subunit protein eS17 of Methanosarcina acetivorans (strain ATCC 35395 / DSM 2834 / JCM 12185 / C2A).